The chain runs to 234 residues: Leucyl/phenylalanyl-tRNA--protein transferase (234 aa).

The protein belongs to the L/F-transferase family.

The protein resides in the cytoplasm. It catalyses the reaction N-terminal L-lysyl-[protein] + L-leucyl-tRNA(Leu) = N-terminal L-leucyl-L-lysyl-[protein] + tRNA(Leu) + H(+). The catalysed reaction is N-terminal L-arginyl-[protein] + L-leucyl-tRNA(Leu) = N-terminal L-leucyl-L-arginyl-[protein] + tRNA(Leu) + H(+). It carries out the reaction L-phenylalanyl-tRNA(Phe) + an N-terminal L-alpha-aminoacyl-[protein] = an N-terminal L-phenylalanyl-L-alpha-aminoacyl-[protein] + tRNA(Phe). Functions in the N-end rule pathway of protein degradation where it conjugates Leu, Phe and, less efficiently, Met from aminoacyl-tRNAs to the N-termini of proteins containing an N-terminal arginine or lysine. The sequence is that of Leucyl/phenylalanyl-tRNA--protein transferase from Dechloromonas aromatica (strain RCB).